The sequence spans 679 residues: Dihydroxyacetone phosphate acyltransferase (679 aa).

S11 is subject to Phosphoserine. An HXXXXD motif motif is present at residues 161–166 (HRSYID). Position 642 is an N6-acetyllysine (K642).

Belongs to the GPAT/DAPAT family. As to quaternary structure, part of a heterotrimeric complex composed of GNPAT, AGPS and a modified form of GNPAT.

The protein localises to the peroxisome membrane. It catalyses the reaction dihydroxyacetone phosphate + an acyl-CoA = a 1-acylglycerone 3-phosphate + CoA. The enzyme catalyses dihydroxyacetone phosphate + hexadecanoyl-CoA = 1-hexadecanoylglycerone 3-phosphate + CoA. It functions in the pathway membrane lipid metabolism; glycerophospholipid metabolism. Dihydroxyacetonephosphate acyltransferase catalyzing the first step in the biosynthesis of plasmalogens, a subset of phospholipids that differ from other glycerolipids by having an alkyl chain attached through a vinyl ether linkage at the sn-1 position of the glycerol backbone, and which unique physical properties have an impact on various aspects of cell signaling and membrane biology. This Oryctolagus cuniculus (Rabbit) protein is Dihydroxyacetone phosphate acyltransferase.